A 370-amino-acid chain; its full sequence is Histidinol-phosphate aminotransferase 2 (370 aa).

The residue at position 230 (Lys230) is an N6-(pyridoxal phosphate)lysine.

It belongs to the class-II pyridoxal-phosphate-dependent aminotransferase family. Histidinol-phosphate aminotransferase subfamily. In terms of assembly, homodimer. Requires pyridoxal 5'-phosphate as cofactor.

It carries out the reaction L-histidinol phosphate + 2-oxoglutarate = 3-(imidazol-4-yl)-2-oxopropyl phosphate + L-glutamate. Its pathway is amino-acid biosynthesis; L-histidine biosynthesis; L-histidine from 5-phospho-alpha-D-ribose 1-diphosphate: step 7/9. This chain is Histidinol-phosphate aminotransferase 2, found in Pseudomonas fluorescens (strain ATCC BAA-477 / NRRL B-23932 / Pf-5).